Consider the following 183-residue polypeptide: Dual-action ribosomal maturation protein DarP (183 aa).

The protein belongs to the DarP family.

It localises to the cytoplasm. Member of a network of 50S ribosomal subunit biogenesis factors which assembles along the 30S-50S interface, preventing incorrect 23S rRNA structures from forming. Promotes peptidyl transferase center (PTC) maturation. This is Dual-action ribosomal maturation protein DarP from Salmonella enteritidis PT4 (strain P125109).